The primary structure comprises 315 residues: Protoheme IX farnesyltransferase (315 aa).

The next 9 helical transmembrane spans lie at 38–58, 62–82, 111–131, 132–152, 159–179, 184–204, 233–253, 255–275, and 293–313; these read IIEL…QGVP, LVLL…ALNM, LVFG…TVNW, LSAW…TMIL, NIVW…SAVT, WAPV…YWPL, IVIY…LGYT, WFYT…AHGL, and LFHW…VDPF.

This sequence belongs to the UbiA prenyltransferase family. Protoheme IX farnesyltransferase subfamily.

It is found in the cell membrane. It catalyses the reaction heme b + (2E,6E)-farnesyl diphosphate + H2O = Fe(II)-heme o + diphosphate. Its pathway is porphyrin-containing compound metabolism; heme O biosynthesis; heme O from protoheme: step 1/1. Functionally, converts heme B (protoheme IX) to heme O by substitution of the vinyl group on carbon 2 of heme B porphyrin ring with a hydroxyethyl farnesyl side group. The polypeptide is Protoheme IX farnesyltransferase (Streptomyces coelicolor (strain ATCC BAA-471 / A3(2) / M145)).